We begin with the raw amino-acid sequence, 205 residues long: Glycerol-3-phosphate acyltransferase 1 (205 aa).

5 helical membrane passes run 7–27, 52–74, 78–100, 125–145, and 160–180; these read TLIG…KLFL, WGIL…VYFV, HINI…WNHF, LLIA…PLVF, and AGIV…QDII.

The protein belongs to the PlsY family. As to quaternary structure, probably interacts with PlsX.

The protein localises to the cell membrane. The enzyme catalyses an acyl phosphate + sn-glycerol 3-phosphate = a 1-acyl-sn-glycero-3-phosphate + phosphate. Its pathway is lipid metabolism; phospholipid metabolism. Its function is as follows. Catalyzes the transfer of an acyl group from acyl-phosphate (acyl-PO(4)) to glycerol-3-phosphate (G3P) to form lysophosphatidic acid (LPA). This enzyme utilizes acyl-phosphate as fatty acyl donor, but not acyl-CoA or acyl-ACP. The chain is Glycerol-3-phosphate acyltransferase 1 from Lactobacillus acidophilus (strain ATCC 700396 / NCK56 / N2 / NCFM).